Here is a 265-residue protein sequence, read N- to C-terminus: MTDPSAHSAALTYGSYLALDELLSAQRPRSEEHDELLFIVVHQVYELWFKQVVHELAYLQERLHRGEGGHALATLKRVLTILKTVVSQVDVIETMTPRQFTAFRSRLEAASGFQSAQFRVLEAMLGRRDERMLAPYPPGGPGHARIAAAMAAPSLFDSLLRYLATQGFAVPPVPEAPAAGWRPPSEAVQRVLLDVYRADGEAALVCERFVDLDEGVQEWRYRHVKMVERTIGDKPGTGGSAGAQYLRTTLFTPAFPDLWAVRGAL.

Substrate is bound by residues 38–42 and Arg104; that span reads FIVVH. His223 contacts heme. Thr237 serves as a coordination point for substrate.

The protein belongs to the tryptophan 2,3-dioxygenase family. In terms of assembly, homotetramer. It depends on heme as a cofactor.

It catalyses the reaction L-tryptophan + O2 = N-formyl-L-kynurenine. It participates in amino-acid degradation; L-tryptophan degradation via kynurenine pathway; L-kynurenine from L-tryptophan: step 1/2. In terms of biological role, heme-dependent dioxygenase that catalyzes the oxidative cleavage of the L-tryptophan (L-Trp) pyrrole ring and converts L-tryptophan to N-formyl-L-kynurenine. Catalyzes the oxidative cleavage of the indole moiety. This is Tryptophan 2,3-dioxygenase from Anaeromyxobacter sp. (strain K).